A 228-amino-acid polypeptide reads, in one-letter code: Ribosomal RNA small subunit methyltransferase G (228 aa).

S-adenosyl-L-methionine is bound by residues Gly-89, Leu-94, 140 to 141, and Arg-159; that span reads VE.

This sequence belongs to the methyltransferase superfamily. RNA methyltransferase RsmG family.

Its subcellular location is the cytoplasm. The enzyme catalyses guanosine(527) in 16S rRNA + S-adenosyl-L-methionine = N(7)-methylguanosine(527) in 16S rRNA + S-adenosyl-L-homocysteine. In terms of biological role, specifically methylates the N7 position of guanine in position 527 of 16S rRNA. The polypeptide is Ribosomal RNA small subunit methyltransferase G (Burkholderia vietnamiensis (strain G4 / LMG 22486) (Burkholderia cepacia (strain R1808))).